A 221-amino-acid chain; its full sequence is Serine/arginine-rich splicing factor 9 (221 aa).

RRM domains are found at residues 14–89 (GRIY…FPRT) and 111–187 (FRVL…PERS). A Glycyl lysine isopeptide (Lys-Gly) (interchain with G-Cter in SUMO2) cross-link involves residue lysine 36. An interaction with SAFB1 region spans residues 188–200 (TSYGYSRSRSGSR). At serine 189 the chain carries Phosphoserine. A compositionally biased stretch (low complexity) spans 189–198 (SYGYSRSRSG). The disordered stretch occupies residues 189–221 (SYGYSRSRSGSRGRDSPYQSRGSPHYFSPFRPY). Position 192 is a phosphotyrosine (tyrosine 192). Phosphoserine occurs at positions 193, 195, 204, 208, and 211. A Phosphotyrosine modification is found at tyrosine 214. Phosphoserine is present on serine 216.

Belongs to the splicing factor SR family. Interacts with KHDRBS3. Interacts with HABP4. Interacts with NOL3/ARC/NOP30. Interacts with NSEP1/YB-1/YB1. Interacts with SAFB/SAFB1. Interacts with SRSF6/SFRS6. Interacts with TRA2B/SFRS10. Interacts with C1QBP. May also interact with DUSP11/PIR1. In terms of processing, extensively phosphorylated on serine residues in the RS domain. Expressed at high levels in the heart, kidney, pancreas and placenta, and at lower levels in the brain, liver, lung and skeletal muscle.

Its subcellular location is the nucleus. Its function is as follows. Plays a role in constitutive splicing and can modulate the selection of alternative splice sites. Represses the splicing of MAPT/Tau exon 10. The chain is Serine/arginine-rich splicing factor 9 (SRSF9) from Homo sapiens (Human).